A 909-amino-acid polypeptide reads, in one-letter code: Protein translocase subunit SecA (909 aa).

ATP is bound by residues Gln87, 105 to 109, and Asp513; that span reads GEGKT. A disordered region spans residues 834–909; the sequence is QEEVERMEEQ…KYKQCHGKID (76 aa). Over residues 836–853 the composition is skewed to basic and acidic residues; that stretch reads EVERMEEQRRAQAEEAAR. The span at 854-863 shows a compositional bias: low complexity; that stretch reads RAQAQHAAAQ. Basic and acidic residues predominate over residues 874 to 889; that stretch reads EGAHQPMVREERKVGR. Positions 893, 895, 904, and 905 each coordinate Zn(2+). The segment covering 899-909 has biased composition (basic residues); that stretch reads KKYKQCHGKID.

This sequence belongs to the SecA family. Monomer and homodimer. Part of the essential Sec protein translocation apparatus which comprises SecA, SecYEG and auxiliary proteins SecDF-YajC and YidC. Zn(2+) serves as cofactor.

It localises to the cell inner membrane. It is found in the cytoplasm. It carries out the reaction ATP + H2O + cellular proteinSide 1 = ADP + phosphate + cellular proteinSide 2.. Functionally, part of the Sec protein translocase complex. Interacts with the SecYEG preprotein conducting channel. Has a central role in coupling the hydrolysis of ATP to the transfer of proteins into and across the cell membrane, serving both as a receptor for the preprotein-SecB complex and as an ATP-driven molecular motor driving the stepwise translocation of polypeptide chains across the membrane. This Vibrio campbellii (strain ATCC BAA-1116) protein is Protein translocase subunit SecA.